We begin with the raw amino-acid sequence, 273 residues long: Formamidopyrimidine-DNA glycosylase (273 aa).

Proline 2 (schiff-base intermediate with DNA) is an active-site residue. Catalysis depends on glutamate 3, which acts as the Proton donor. Lysine 58 acts as the Proton donor; for beta-elimination activity in catalysis. DNA-binding residues include histidine 92, arginine 111, and lysine 153. The segment at 238 to 272 (MVYARDGQECLSCSSSIIKTKHSGRSTFYCKSCQK) adopts an FPG-type zinc-finger fold. Arginine 262 acts as the Proton donor; for delta-elimination activity in catalysis.

Belongs to the FPG family. In terms of assembly, monomer. Zn(2+) serves as cofactor.

It carries out the reaction Hydrolysis of DNA containing ring-opened 7-methylguanine residues, releasing 2,6-diamino-4-hydroxy-5-(N-methyl)formamidopyrimidine.. The catalysed reaction is 2'-deoxyribonucleotide-(2'-deoxyribose 5'-phosphate)-2'-deoxyribonucleotide-DNA = a 3'-end 2'-deoxyribonucleotide-(2,3-dehydro-2,3-deoxyribose 5'-phosphate)-DNA + a 5'-end 5'-phospho-2'-deoxyribonucleoside-DNA + H(+). In terms of biological role, involved in base excision repair of DNA damaged by oxidation or by mutagenic agents. Acts as a DNA glycosylase that recognizes and removes damaged bases. Has a preference for oxidized purines, such as 7,8-dihydro-8-oxoguanine (8-oxoG). Has AP (apurinic/apyrimidinic) lyase activity and introduces nicks in the DNA strand. Cleaves the DNA backbone by beta-delta elimination to generate a single-strand break at the site of the removed base with both 3'- and 5'-phosphates. The chain is Formamidopyrimidine-DNA glycosylase from Rickettsia bellii (strain OSU 85-389).